Here is a 667-residue protein sequence, read N- to C-terminus: Probable potassium transport system protein Kup (667 aa).

12 helical membrane-spanning segments follow: residues 16–36, 58–78, 101–121, 146–166, 167–187, 221–241, 253–273, 294–314, 343–363, 373–393, 399–419, and 431–451; these read GFII…LYTM, VSLI…LIAL, WLII…ALTP, TNVI…QRFG, TGVI…VLGI, IFIL…YSDL, WPFV…WILA, VYLV…LISG, LYIP…VLYF, YGLA…YYLI, PLLA…FFLA, and VVVL…GTVI.

The protein belongs to the HAK/KUP transporter (TC 2.A.72) family.

It localises to the cell membrane. The catalysed reaction is K(+)(in) + H(+)(in) = K(+)(out) + H(+)(out). Functionally, transport of potassium into the cell. Likely operates as a K(+):H(+) symporter. This Streptococcus equi subsp. zooepidemicus (strain H70) protein is Probable potassium transport system protein Kup.